The following is a 1378-amino-acid chain: Carboxypeptidase D (1378 aa).

The first 37 residues, 1 to 37, serve as a signal peptide directing secretion; sequence MASGWDERPPWRLESLRLLPPPPLLLLLLLLRSSAQA. The Extracellular portion of the chain corresponds to 38 to 1297; that stretch reads AHIKKAEATT…DNRIFGLPRE (1260 aa). The Peptidase M14 1 domain occupies 62-380; that stretch reads HYYHEAALGE…ESLITLIEKV (319 aa). The Zn(2+) site is built by histidine 139 and glutamate 142. Residues 162–164 carry the Cell attachment site motif; the sequence is RGD. N-linked (GlcNAc...) asparagine glycans are attached at residues asparagine 172 and asparagine 217. Residues 189-232 form a disordered region; it reads RAREGDCGLGDSGPPGTSGRDNSRGRDLNRSFPDQFSTGEPPSL. Histidine 257 is a binding site for Zn(2+). Residue tyrosine 265 is modified to Phosphotyrosine. Serine 270 bears the Phosphoserine mark. Glutamate 350 serves as the catalytic Proton donor/acceptor. N-linked (GlcNAc...) asparagine glycans are attached at residues asparagine 399, asparagine 410, asparagine 429, and asparagine 522. The Peptidase M14 2 domain occupies 502-792; it reads HHHHFPDMEI…RSLIQFMKQV (291 aa). The Zn(2+) site is built by histidine 564 and glutamate 567. A glycan (N-linked (GlcNAc...) asparagine) is linked at asparagine 626. Zn(2+) is bound at residue histidine 671. Catalysis depends on glutamate 762, which acts as the Proton donor/acceptor. Asparagine 811, asparagine 855, asparagine 867, asparagine 879, asparagine 953, and asparagine 976 each carry an N-linked (GlcNAc...) asparagine glycan. Residues 875 to 898 form a disordered region; that stretch reads TDANNESKKGKGHSTSTDDTSDPT. The Peptidase M14 3 domain occupies 930–1209; that stretch reads RYHSYKDLSE…KSLLSMLVEV (280 aa). Residues 1039–1048 show a composition bias toward basic and acidic residues; the sequence is RERAQEKDCT. The interval 1039-1068 is disordered; that stretch reads RERAQEKDCTSKTGHTNARGRDLDTDFTSN. N-linked (GlcNAc...) asparagine glycosylation is found at asparagine 1068 and asparagine 1140. The helical transmembrane segment at 1298-1318 threads the bilayer; the sequence is LVVTVSGATMSALILTACIIW. S-palmitoyl cysteine attachment occurs at residues cysteine 1315, cysteine 1319, and cysteine 1321. Over 1319 to 1378 the chain is Cytoplasmic; that stretch reads CICSIKSNRHKDGFHRLRQHHDEYEDEIRMMSTGSKKSLLSHEFQDETDTEEETLYSSKH. A phosphoserine mark is found at serine 1356 and serine 1359. A disordered region spans residues 1357-1378; the sequence is LLSHEFQDETDTEEETLYSSKH. A phosphothreonine mark is found at threonine 1366 and threonine 1368.

Belongs to the peptidase M14 family. The cofactor is Zn(2+). Isoform 1 is widely expressed with highest levels in the hippocampus, spinal cord, atrium, colon, testis and ovaries. Detected in the liver of females but not males. Isoform 2 is not detected in brain or lung.

Its subcellular location is the cell membrane. The protein localises to the nucleus. It carries out the reaction Releases C-terminal Arg and Lys from polypeptides.. This Rattus norvegicus (Rat) protein is Carboxypeptidase D.